A 242-amino-acid polypeptide reads, in one-letter code: Uridylate kinase (242 aa).

An ATP-binding site is contributed by 15–18; it reads KLSG. Residues 23-28 are involved in allosteric activation by GTP; it reads GDEGFG. Residue Gly-57 coordinates UMP. ATP contacts are provided by Gly-58 and Arg-62. UMP contacts are provided by residues Asp-77 and 138–145; that span reads TGNPFCTT. ATP contacts are provided by Thr-165, Tyr-171, and Asp-174.

This sequence belongs to the UMP kinase family. As to quaternary structure, homohexamer.

It is found in the cytoplasm. The enzyme catalyses UMP + ATP = UDP + ADP. Its pathway is pyrimidine metabolism; CTP biosynthesis via de novo pathway; UDP from UMP (UMPK route): step 1/1. Allosterically activated by GTP. Inhibited by UTP. Functionally, catalyzes the reversible phosphorylation of UMP to UDP. The sequence is that of Uridylate kinase from Shewanella sp. (strain MR-4).